The sequence spans 681 residues: Phenylalanine--tRNA ligase beta subunit (681 aa).

The region spanning 288-363 (PARETVLLRP…RIHGYDQIPE (76 aa)) is the B5 domain. Mg(2+) is bound by residues Asp-341, Asp-347, Glu-350, and Glu-351. The region spanning 586 to 681 (SSFPSIQRDL…EKQLEAVLLR (96 aa)) is the FDX-ACB domain.

This sequence belongs to the phenylalanyl-tRNA synthetase beta subunit family. Type 1 subfamily. Tetramer of two alpha and two beta subunits. The cofactor is Mg(2+).

It localises to the cytoplasm. The enzyme catalyses tRNA(Phe) + L-phenylalanine + ATP = L-phenylalanyl-tRNA(Phe) + AMP + diphosphate + H(+). The sequence is that of Phenylalanine--tRNA ligase beta subunit from Rhodopirellula baltica (strain DSM 10527 / NCIMB 13988 / SH1).